Reading from the N-terminus, the 422-residue chain is MSSRYRVEYNLKVHKKDAFIEWIKGLLAVPFVLQAGTDSGAERTYKQYCSIFSDIENLVSQKIEIQNRRRQLGSLEEARLDQLVPQVGTFFTHLPLVEAFEVQNRRRAICSRKMVSPSFNDIRHILNSAQILALLKSKELKLVTFDGDVTLYEDGGSIERGGKIVTRIITLLKRGINVGVVTAAGYDDPDKYKERLYGLCFALFSDKSMSLEQKSKLTVMGGESNYLFQYFETSEQFGFKSIDDDEWVPSSVKAWSDDDIDATLDVAQTCFGELSHLLALPSKCQIIRKKRAVGFVPGFIFDDELEVNVKIKIPREALEEMVLVVQKKLESYPPAQNIQFSCFDGGSDVWCDIGGKDLGVSILQNFYQTDSPITAAQTLHIGDQFAPKGSANDFKARSAGCTLWISSPRETIEVLDDLLPYL.

ATP-binding residues include arginine 106 and histidine 124. The active-site Nucleophile is aspartate 146. Residues aspartate 146, aspartate 148, aspartate 154, threonine 182, aspartate 348, and lysine 356 each contribute to the IMP site. Mg(2+)-binding residues include aspartate 146 and aspartate 148. Catalysis depends on aspartate 148, which acts as the Proton donor. Aspartate 383 provides a ligand contact to Mg(2+).

It belongs to the ISN1 family. As to quaternary structure, homotetramer. Mg(2+) is required as a cofactor.

It catalyses the reaction IMP + H2O = inosine + phosphate. Allosterically activated by ATP. ATP binding is a prerequisite to magnesium and substrate binding. ATP binds to 2 of the subunits in the homotetramer inducing a closure of these 2 subunits and the release of the C-terminal loop, thereby activating the enzyme. IMP-specific 5'-nucleotidase involved in IMP (inositol monophosphate) degradation. In Kluyveromyces lactis (strain ATCC 8585 / CBS 2359 / DSM 70799 / NBRC 1267 / NRRL Y-1140 / WM37) (Yeast), this protein is IMP-specific 5'-nucleotidase 1 (ISN1).